The following is a 439-amino-acid chain: Xylose isomerase (439 aa).

Residues H101 and D104 contribute to the active site. Positions 232, 268, 271, 296, 307, 309, and 339 each coordinate Mg(2+).

It belongs to the xylose isomerase family. As to quaternary structure, homotetramer. It depends on Mg(2+) as a cofactor.

The protein localises to the cytoplasm. The catalysed reaction is alpha-D-xylose = alpha-D-xylulofuranose. In Lactococcus lactis subsp. lactis (strain IL1403) (Streptococcus lactis), this protein is Xylose isomerase (xylA).